Here is a 539-residue protein sequence, read N- to C-terminus: Efflux pump roqT (539 aa).

The disordered stretch occupies residues 1-25 (MEKEVATDPLPQEIPSDAPDEGGSL). The next 12 membrane-spanning stretches (helical) occupy residues 36 to 56 (VSLT…VTII), 108 to 128 (LFLF…VGLI), 133 to 153 (IAGL…AQTV), 160 to 180 (VFTA…PPLG), 191 to 211 (WCFY…LFFF), 233 to 253 (IGSF…QWGG), 262 to 282 (RIIV…AVQI), 305 to 325 (WFAI…PIWF), 338 to 360 (VMNL…LVTI), 362 to 384 (GYYN…LLST), 395 to 415 (IGYQ…PFMV), and 502 to 522 (AFYV…ALEW).

It belongs to the major facilitator superfamily. TCR/Tet family.

It is found in the membrane. Functionally, efflux pump; part of the gene cluster that mediates the biosynthesis of the mycotoxins roquefortine C and meleagrin. In Penicillium rubens (strain ATCC 28089 / DSM 1075 / NRRL 1951 / Wisconsin 54-1255) (Penicillium chrysogenum), this protein is Efflux pump roqT.